Reading from the N-terminus, the 122-residue chain is Neutral phospholipase A2 agkistrodotoxin (122 aa).

Cystine bridges form between Cys26–Cys115, Cys28–Cys44, Cys43–Cys95, Cys49–Cys122, Cys50–Cys88, Cys57–Cys81, and Cys75–Cys86. 3 residues coordinate Ca(2+): Tyr27, Gly29, and Gly31. Residue His47 is part of the active site. Asp48 provides a ligand contact to Ca(2+). The active site involves Asp89.

Ca(2+) serves as cofactor. As to expression, expressed by the venom gland.

The protein resides in the secreted. It catalyses the reaction a 1,2-diacyl-sn-glycero-3-phosphocholine + H2O = a 1-acyl-sn-glycero-3-phosphocholine + a fatty acid + H(+). In terms of biological role, snake venom phospholipase A2 (PLA2) that inhibits neuromuscular transmission by blocking acetylcholine release from the nerve termini. PLA2 catalyzes the calcium-dependent hydrolysis of the 2-acyl groups in 3-sn-phosphoglycerides. The chain is Neutral phospholipase A2 agkistrodotoxin from Gloydius halys (Chinese water mocassin).